A 115-amino-acid polypeptide reads, in one-letter code: DNA-directed RNA polymerase subunit Rpo4 (115 aa).

The protein belongs to the eukaryotic RPB4 RNA polymerase subunit family. Part of the RNA polymerase complex. Forms a stalk with Rpo7 that extends from the main structure.

It is found in the cytoplasm. The enzyme catalyses RNA(n) + a ribonucleoside 5'-triphosphate = RNA(n+1) + diphosphate. In terms of biological role, DNA-dependent RNA polymerase (RNAP) catalyzes the transcription of DNA into RNA using the four ribonucleoside triphosphates as substrates. This subunit is less well bound than the others. The protein is DNA-directed RNA polymerase subunit Rpo4 of Methanocaldococcus jannaschii (strain ATCC 43067 / DSM 2661 / JAL-1 / JCM 10045 / NBRC 100440) (Methanococcus jannaschii).